Reading from the N-terminus, the 488-residue chain is Glutamyl-tRNA(Gln) amidotransferase subunit A (488 aa).

Catalysis depends on charge relay system residues lysine 77 and serine 152. The active-site Acyl-ester intermediate is the serine 176.

Belongs to the amidase family. GatA subfamily. Heterotrimer of A, B and C subunits.

It carries out the reaction L-glutamyl-tRNA(Gln) + L-glutamine + ATP + H2O = L-glutaminyl-tRNA(Gln) + L-glutamate + ADP + phosphate + H(+). Its function is as follows. Allows the formation of correctly charged Gln-tRNA(Gln) through the transamidation of misacylated Glu-tRNA(Gln) in organisms which lack glutaminyl-tRNA synthetase. The reaction takes place in the presence of glutamine and ATP through an activated gamma-phospho-Glu-tRNA(Gln). The sequence is that of Glutamyl-tRNA(Gln) amidotransferase subunit A from Streptococcus gordonii (strain Challis / ATCC 35105 / BCRC 15272 / CH1 / DL1 / V288).